The following is a 373-amino-acid chain: UDP-N-acetylglucosamine--N-acetylmuramyl-(pentapeptide) pyrophosphoryl-undecaprenol N-acetylglucosamine transferase (373 aa).

Residues 10–12, N124, S195, and Q297 contribute to the UDP-N-acetyl-alpha-D-glucosamine site; that span reads TGG.

Belongs to the glycosyltransferase 28 family. MurG subfamily.

Its subcellular location is the cell membrane. The catalysed reaction is Mur2Ac(oyl-L-Ala-gamma-D-Glu-L-Lys-D-Ala-D-Ala)-di-trans,octa-cis-undecaprenyl diphosphate + UDP-N-acetyl-alpha-D-glucosamine = beta-D-GlcNAc-(1-&gt;4)-Mur2Ac(oyl-L-Ala-gamma-D-Glu-L-Lys-D-Ala-D-Ala)-di-trans,octa-cis-undecaprenyl diphosphate + UDP + H(+). It participates in cell wall biogenesis; peptidoglycan biosynthesis. Its function is as follows. Cell wall formation. Catalyzes the transfer of a GlcNAc subunit on undecaprenyl-pyrophosphoryl-MurNAc-pentapeptide (lipid intermediate I) to form undecaprenyl-pyrophosphoryl-MurNAc-(pentapeptide)GlcNAc (lipid intermediate II). The chain is UDP-N-acetylglucosamine--N-acetylmuramyl-(pentapeptide) pyrophosphoryl-undecaprenol N-acetylglucosamine transferase from Oenococcus oeni (strain ATCC BAA-331 / PSU-1).